Reading from the N-terminus, the 217-residue chain is Ranaspumin (217 aa).

4 cysteine pairs are disulfide-bonded: Cys18–Cys67, Cys38–Cys114, Cys125–Cys168, and Cys146–Cys207.

Monomer. In terms of tissue distribution, exclusively expressed in females in the early oviduct, the glandular part of the oviduct (pars convoluta dilata) and in the cloaca.

The protein resides in the secreted. Functionally, acts as a surfactant. Is the major protein constituent (45%) of foam nests. Has no antimicrobial activity, no larvicidal activity, and is not toxic to mice. The sequence is that of Ranaspumin from Leptodactylus vastus (Northeastern pepper frog).